The sequence spans 402 residues: Putative cystathionine beta-lyase (402 aa).

Residue K236 is modified to N6-(pyridoxal phosphate)lysine.

This sequence belongs to the class-II pyridoxal-phosphate-dependent aminotransferase family. MalY/PatB cystathionine beta-lyase subfamily. Requires pyridoxal 5'-phosphate as cofactor.

The catalysed reaction is L,L-cystathionine + H2O = L-homocysteine + pyruvate + NH4(+). It carries out the reaction an S-substituted L-cysteine + H2O = a thiol + pyruvate + NH4(+). Its pathway is amino-acid biosynthesis; L-methionine biosynthesis via de novo pathway; L-homocysteine from L-cystathionine: step 1/1. This is Putative cystathionine beta-lyase from Mycobacterium leprae (strain TN).